The sequence spans 308 residues: Uricase-2 isozyme 1 (308 aa).

Residues lysine 17 and threonine 63 each act as charge relay system in the active site. Urate-binding residues include threonine 63, aspartate 64, phenylalanine 165, arginine 182, valine 237, glutamine 238, and asparagine 264. The Charge relay system role is filled by histidine 266. The Microbody targeting signal motif lies at serine 306–leucine 308.

Belongs to the uricase family.

Its subcellular location is the peroxisome. It catalyses the reaction urate + O2 + H2O = 5-hydroxyisourate + H2O2. Its pathway is purine metabolism; urate degradation; (S)-allantoin from urate: step 1/3. Catalyzes the oxidation of uric acid to 5-hydroxyisourate, which is further processed to form (S)-allantoin. The chain is Uricase-2 isozyme 1 from Canavalia lineata (Beach bean).